The primary structure comprises 360 residues: Histidinol-phosphate aminotransferase (360 aa).

Lys222 is modified (N6-(pyridoxal phosphate)lysine).

It belongs to the class-II pyridoxal-phosphate-dependent aminotransferase family. Histidinol-phosphate aminotransferase subfamily. The cofactor is pyridoxal 5'-phosphate.

The catalysed reaction is L-histidinol phosphate + 2-oxoglutarate = 3-(imidazol-4-yl)-2-oxopropyl phosphate + L-glutamate. The protein operates within amino-acid biosynthesis; L-histidine biosynthesis; L-histidine from 5-phospho-alpha-D-ribose 1-diphosphate: step 7/9. The protein is Histidinol-phosphate aminotransferase of Haloarcula marismortui (strain ATCC 43049 / DSM 3752 / JCM 8966 / VKM B-1809) (Halobacterium marismortui).